We begin with the raw amino-acid sequence, 125 residues long: Large ribosomal subunit protein eL31 (125 aa).

Met1 bears the N-acetylmethionine mark. Ser15 is modified (phosphoserine). An N6-succinyllysine mark is found at Lys55 and Lys70. Lys75 is subject to N6-acetyllysine; alternate. Lys75 bears the N6-succinyllysine; alternate mark. A Phosphoserine modification is found at Ser98.

Belongs to the eukaryotic ribosomal protein eL31 family. Component of the large ribosomal subunit.

The protein localises to the cytoplasm. In terms of biological role, component of the large ribosomal subunit. The ribosome is a large ribonucleoprotein complex responsible for the synthesis of proteins in the cell. The chain is Large ribosomal subunit protein eL31 (RPL31) from Pongo abelii (Sumatran orangutan).